The chain runs to 334 residues: S-adenosylmethionine decarboxylase proenzyme 1 (334 aa).

Phenylalanine 7 lines the substrate pocket. Residues glutamate 8 and glutamate 11 contribute to the active site. Glutamate 67 provides a ligand contact to substrate. Serine 68 functions as the Schiff-base intermediate with substrate; via pyruvic acid in the catalytic mechanism. At serine 68 the chain carries Pyruvic acid (Ser); by autocatalysis. Cysteine 82 serves as the catalytic Proton donor; for catalytic activity. A substrate-binding site is contributed by phenylalanine 223. Residues serine 229 and histidine 243 each act as proton acceptor; for processing activity in the active site. Glutamate 247 contacts substrate. Serine 298 bears the Phosphoserine mark.

The protein belongs to the eukaryotic AdoMetDC family. As to quaternary structure, heterotetramer of two alpha and two beta chains. Requires pyruvate as cofactor. In terms of processing, is synthesized initially as an inactive proenzyme. Formation of the active enzyme involves a self-maturation process in which the active site pyruvoyl group is generated from an internal serine residue via an autocatalytic post-translational modification. Two non-identical subunits are generated from the proenzyme in this reaction, and the pyruvate is formed at the N-terminus of the alpha chain, which is derived from the carboxyl end of the proenzyme. The post-translation cleavage follows an unusual pathway, termed non-hydrolytic serinolysis, in which the side chain hydroxyl group of the serine supplies its oxygen atom to form the C-terminus of the beta chain, while the remainder of the serine residue undergoes an oxidative deamination to produce ammonia and the pyruvoyl group blocking the N-terminus of the alpha chain. Expressed in embryonic stem cells; subsequently down-regulated in differentiating neural precursor cells.

It carries out the reaction S-adenosyl-L-methionine + H(+) = S-adenosyl 3-(methylsulfanyl)propylamine + CO2. It functions in the pathway amine and polyamine biosynthesis; S-adenosylmethioninamine biosynthesis; S-adenosylmethioninamine from S-adenosyl-L-methionine: step 1/1. Functionally, essential for biosynthesis of the polyamines spermidine and spermine. Promotes maintenance and self-renewal of embryonic stem cells, by maintaining spermine levels. This Mus musculus (Mouse) protein is S-adenosylmethionine decarboxylase proenzyme 1 (Amd1).